The following is a 197-amino-acid chain: ATP-dependent Clp protease proteolytic subunit (197 aa).

S100 serves as the catalytic Nucleophile. H125 is an active-site residue.

The protein belongs to the peptidase S14 family. In terms of assembly, component of the chloroplastic Clp protease core complex.

It is found in the plastid. The protein localises to the chloroplast stroma. It catalyses the reaction Hydrolysis of proteins to small peptides in the presence of ATP and magnesium. alpha-casein is the usual test substrate. In the absence of ATP, only oligopeptides shorter than five residues are hydrolyzed (such as succinyl-Leu-Tyr-|-NHMec, and Leu-Tyr-Leu-|-Tyr-Trp, in which cleavage of the -Tyr-|-Leu- and -Tyr-|-Trp bonds also occurs).. Its function is as follows. Cleaves peptides in various proteins in a process that requires ATP hydrolysis. Has a chymotrypsin-like activity. Plays a major role in the degradation of misfolded proteins. In Angiopteris evecta (Mule's foot fern), this protein is ATP-dependent Clp protease proteolytic subunit.